A 270-amino-acid chain; its full sequence is MRLIPLANASDVGKWSAHYIVSKINAFNPTAEHPFILGLPTGSTPLATYKELIALHKAGKVSFKYVVTFNMDEYVGITENHPQSYHHFMHQNFLDHIDIPKENINLLNGNASDVETECQRYEDKIKSYGQIHLFMGGVGNDGHIAFNEPASSLTSRTRIKTLTVETRTANSRFFDNDINQVPKYALTVGVGTLMDAEEIMILATGLNKAQAIQAAIEGNVNHMWTISCLQMHPKSIIVCDEPATMELKVKTVKYFHQLEADIIGEFASKK.

Aspartate 72 (proton acceptor; for enolization step) is an active-site residue. Aspartate 141 functions as the For ring-opening step in the catalytic mechanism. Residue histidine 143 is the Proton acceptor; for ring-opening step of the active site. Glutamate 148 (for ring-opening step) is an active-site residue.

Belongs to the glucosamine/galactosamine-6-phosphate isomerase family. NagB subfamily. As to quaternary structure, homohexamer.

The catalysed reaction is alpha-D-glucosamine 6-phosphate + H2O = beta-D-fructose 6-phosphate + NH4(+). It functions in the pathway amino-sugar metabolism; N-acetylneuraminate degradation; D-fructose 6-phosphate from N-acetylneuraminate: step 5/5. With respect to regulation, allosterically activated by N-acetylglucosamine 6-phosphate (GlcNAc6P). Catalyzes the reversible isomerization-deamination of glucosamine 6-phosphate (GlcN6P) to form fructose 6-phosphate (Fru6P) and ammonium ion. This is Glucosamine-6-phosphate deaminase from Photorhabdus laumondii subsp. laumondii (strain DSM 15139 / CIP 105565 / TT01) (Photorhabdus luminescens subsp. laumondii).